A 443-amino-acid polypeptide reads, in one-letter code: Cobyrinate a,c-diamide synthase (443 aa).

One can recognise a GATase cobBQ-type domain in the interval 248–433; the sequence is KIAVAYDKAF…LHNHAVANPY (186 aa). Cys327 serves as the catalytic Nucleophile.

The protein belongs to the CobB/CbiA family. The cofactor is Mg(2+).

The catalysed reaction is cob(II)yrinate + 2 L-glutamine + 2 ATP + 2 H2O = cob(II)yrinate a,c diamide + 2 L-glutamate + 2 ADP + 2 phosphate + 2 H(+). It catalyses the reaction Ni-sirohydrochlorin + 2 L-glutamine + 2 ATP + 2 H2O = Ni-sirohydrochlorin a,c-diamide + 2 L-glutamate + 2 ADP + 2 phosphate + 2 H(+). It participates in cofactor biosynthesis; adenosylcobalamin biosynthesis; cob(II)yrinate a,c-diamide from sirohydrochlorin (anaerobic route): step 10/10. In terms of biological role, catalyzes the ATP-dependent amidation of the two carboxylate groups at positions a and c of cobyrinate, using either L-glutamine or ammonia as the nitrogen source. Involved in the biosynthesis of the unique nickel-containing tetrapyrrole coenzyme F430, the prosthetic group of methyl-coenzyme M reductase (MCR), which plays a key role in methanogenesis and anaerobic methane oxidation. Catalyzes the ATP-dependent amidation of the two carboxylate groups at positions a and c of Ni-sirohydrochlorin, using L-glutamine or ammonia as the nitrogen source. The polypeptide is Cobyrinate a,c-diamide synthase (Methanocaldococcus jannaschii (strain ATCC 43067 / DSM 2661 / JAL-1 / JCM 10045 / NBRC 100440) (Methanococcus jannaschii)).